A 217-amino-acid chain; its full sequence is Ribosome maturation factor RimM (217 aa).

The 72-residue stretch at 115–186 (EDAWYDNQLV…TVTLTPPPGL (72 aa)) folds into the PRC barrel domain. Residues 181-217 (TPPPGLFEDLPDDAPAAGDESEPVSPPVTAEETPGGE) are disordered.

The protein belongs to the RimM family. In terms of assembly, binds ribosomal protein uS19.

It is found in the cytoplasm. Its function is as follows. An accessory protein needed during the final step in the assembly of 30S ribosomal subunit, possibly for assembly of the head region. Essential for efficient processing of 16S rRNA. May be needed both before and after RbfA during the maturation of 16S rRNA. It has affinity for free ribosomal 30S subunits but not for 70S ribosomes. In Leifsonia xyli subsp. xyli (strain CTCB07), this protein is Ribosome maturation factor RimM.